We begin with the raw amino-acid sequence, 443 residues long: Probable D-serine dehydratase (443 aa).

Position 118 is an N6-(pyridoxal phosphate)lysine (K118).

The protein belongs to the serine/threonine dehydratase family. DsdA subfamily. Pyridoxal 5'-phosphate is required as a cofactor.

The enzyme catalyses D-serine = pyruvate + NH4(+). The polypeptide is Probable D-serine dehydratase (Vibrio parahaemolyticus serotype O3:K6 (strain RIMD 2210633)).